Consider the following 375-residue polypeptide: Chaperone protein DnaJ (375 aa).

The region spanning 4–68 (DYYEILGVSR…ETRARYDRFG (65 aa)) is the J domain. The CR-type zinc finger occupies 135-217 (GGEKEIRISH…CDGKGANQVT (83 aa)). Zn(2+) is bound by residues cysteine 148, cysteine 151, cysteine 165, cysteine 168, cysteine 191, cysteine 194, cysteine 205, and cysteine 208. 4 CXXCXGXG motif repeats span residues 148 to 155 (CEVCSGSG), 165 to 172 (CSTCSGSG), 191 to 198 (CPTCNGTG), and 205 to 212 (CDACDGKG).

This sequence belongs to the DnaJ family. As to quaternary structure, homodimer. Zn(2+) is required as a cofactor.

It localises to the cytoplasm. Its function is as follows. Participates actively in the response to hyperosmotic and heat shock by preventing the aggregation of stress-denatured proteins and by disaggregating proteins, also in an autonomous, DnaK-independent fashion. Unfolded proteins bind initially to DnaJ; upon interaction with the DnaJ-bound protein, DnaK hydrolyzes its bound ATP, resulting in the formation of a stable complex. GrpE releases ADP from DnaK; ATP binding to DnaK triggers the release of the substrate protein, thus completing the reaction cycle. Several rounds of ATP-dependent interactions between DnaJ, DnaK and GrpE are required for fully efficient folding. Also involved, together with DnaK and GrpE, in the DNA replication of plasmids through activation of initiation proteins. The sequence is that of Chaperone protein DnaJ from Nostoc punctiforme (strain ATCC 29133 / PCC 73102).